The sequence spans 197 residues: Tyrosine-protein phosphatase-like protein OCA2 (197 aa).

Residues 10–160 (SPVVSTDVSL…FETNLKIPRN (151 aa)) enclose the Tyrosine-protein phosphatase domain. Residue Ser-181 is modified to Phosphoserine.

The protein belongs to the protein-tyrosine phosphatase family.

Its subcellular location is the cytoplasm. Required for normal growth in the presence of linoleic acid hydroperoxide (LoaOOH). In Saccharomyces cerevisiae (strain ATCC 204508 / S288c) (Baker's yeast), this protein is Tyrosine-protein phosphatase-like protein OCA2 (OCA2).